A 281-amino-acid chain; its full sequence is MEIISDKAAMAARSEAVRREGKTIAFVPTMGYLHEGHLSLLKRGRSLCDYLVLSIFVNPTQFGPNEDLDAYPRDEERDRKVAQEAGVDVIFMPNNEMMYGPNYQTYVALEKLPYHLCGLSRPVHFRGVATVVTKLFNIVRPHTAIFGEKDFQQLAVIRQMVKDLDFGIEIIGGPTVREPDGLAMSSRNAYLTPEQRKDAVALYNSLNQAQEMVSAGGKSAAAILEKASETILAVPGAEIDYAKLCDPATLDDVEAIAGPTLMALAVKIGSTRLIDNKVLEP.

Residue M30–H37 participates in ATP binding. Catalysis depends on H37, which acts as the Proton donor. Residue Q61 participates in (R)-pantoate binding. Q61 lines the beta-alanine pocket. G147–D150 is a binding site for ATP. (R)-pantoate is bound at residue Q153. ATP is bound by residues V176 and M184–R187.

Belongs to the pantothenate synthetase family. In terms of assembly, homodimer.

It is found in the cytoplasm. The enzyme catalyses (R)-pantoate + beta-alanine + ATP = (R)-pantothenate + AMP + diphosphate + H(+). It functions in the pathway cofactor biosynthesis; (R)-pantothenate biosynthesis; (R)-pantothenate from (R)-pantoate and beta-alanine: step 1/1. Catalyzes the condensation of pantoate with beta-alanine in an ATP-dependent reaction via a pantoyl-adenylate intermediate. The sequence is that of Pantothenate synthetase from Desulfatibacillum aliphaticivorans.